A 191-amino-acid polypeptide reads, in one-letter code: Large ribosomal subunit protein uL3 (191 aa).

The tract at residues 119–138 (AAHGSRFHRRPGSIGNREWP) is disordered.

Belongs to the universal ribosomal protein uL3 family. In terms of assembly, part of the 50S ribosomal subunit. Forms a cluster with proteins L14 and L19.

Its function is as follows. One of the primary rRNA binding proteins, it binds directly near the 3'-end of the 23S rRNA, where it nucleates assembly of the 50S subunit. The sequence is that of Large ribosomal subunit protein uL3 (rplC) from Helicobacter pylori (strain ATCC 700392 / 26695) (Campylobacter pylori).